A 1521-amino-acid chain; its full sequence is Probable DNA topoisomerase 2 (1521 aa).

Over residues 1 to 10 (MSDSENDYSD) the composition is skewed to acidic residues. Residues 1-87 (MSDSENDYSD…DDKSSSSDNE (87 aa)) are disordered. The span at 36–48 (SKKKASATRKPAA) shows a compositional bias: basic residues. Over residues 49 to 62 (KKATTTTTSTTKKS) the composition is skewed to low complexity. ATP is bound by residues asparagine 163, asparagine 192, 220–222 (SSH), and 233–240 (GRNGFGAK). The segment at 412-414 (NKK) is interaction with DNA. ATP is bound at residue 446-448 (QTK). The Toprim domain maps to 527–640 (CTLILTEGDS…TLLRMPGFLV (114 aa)). The Mg(2+) site is built by glutamate 533, aspartate 609, and aspartate 611. One can recognise a Topo IIA-type catalytic domain in the interval 771–1273 (IPNIVDGLKT…PIQEIYKRDL (503 aa)). The active-site O-(5'-phospho-DNA)-tyrosine intermediate is tyrosine 861. Residues 1007–1047 (GTRKKKKEEKEKKAASRKGTKAKPTTTKRSKRVDDDDDNEK) are disordered. Positions 1021–1037 (ASRKGTKAKPTTTKRSK) are enriched in basic residues. Residues 1085–1094 (KLVSTINETN) form an interaction with DNA region. Disordered regions lie at residues 1192–1222 (KIKK…EQDD) and 1335–1521 (IPTT…SDSD). Residues 1201-1222 (DEEDAAISSDEEKDGAQEEQDD) show a composition bias toward acidic residues. Residues 1354 to 1368 (TTSTSTSTTTSSNTK) show a composition bias toward low complexity. Over residues 1422–1438 (LSDESDQESDQESDQGS) the composition is skewed to acidic residues. Residues 1454–1467 (PTTIATKKATTSKS) are compositionally biased toward low complexity. Residues 1468–1480 (KVIDDKSSDDEVI) show a composition bias toward basic and acidic residues. Positions 1503–1521 (SDSDDDDLYDNEESSSDSD) are enriched in acidic residues.

It belongs to the type II topoisomerase family. In terms of assembly, homodimer. The cofactor is Mg(2+). Requires Mn(2+) as cofactor. Ca(2+) is required as a cofactor.

The protein resides in the nucleus. The enzyme catalyses ATP-dependent breakage, passage and rejoining of double-stranded DNA.. In terms of biological role, control of topological states of DNA by transient breakage and subsequent rejoining of DNA strands. Topoisomerase II makes double-strand breaks. In Dictyostelium discoideum (Social amoeba), this protein is Probable DNA topoisomerase 2 (top2).